Reading from the N-terminus, the 285-residue chain is Protease HtpX homolog (285 aa).

2 helical membrane-spanning segments follow: residues 7–27 (TAMLMAAITALFIVIGGMIGG) and 30–50 (GMTIALLIALGMNFFSYWFSD). Residue H131 coordinates Zn(2+). E132 is an active-site residue. H135 is a Zn(2+) binding site. A run of 2 helical transmembrane segments spans residues 146-166 (ISATMAGAISALANFAMFFGG) and 177-197 (IAGIAVALLAPIAGALIQMAI). A Zn(2+)-binding site is contributed by E202.

Belongs to the peptidase M48B family. It depends on Zn(2+) as a cofactor.

The protein resides in the cell inner membrane. The protein is Protease HtpX homolog of Burkholderia mallei (strain NCTC 10247).